The sequence spans 631 residues: Peptide-N(4)-(N-acetyl-beta-glucosaminyl)asparagine amidase (631 aa).

A PUB domain is found at 34–97; that stretch reads EAVRILLVLL…PSSNAYTLPT (64 aa). Residue S126 is modified to Phosphoserine. C246, C249, C272, and C273 together coordinate Zn(2+). Catalysis depends on C296, which acts as the Nucleophile. Active-site residues include H323 and D340. A PAW domain is found at 441–631; sequence ELKGRSSGSL…YPFDLQVQLH (191 aa).

This sequence belongs to the transglutaminase-like superfamily. PNGase family. The cofactor is Zn(2+).

The protein localises to the cytoplasm. The catalysed reaction is Hydrolysis of an N(4)-(acetyl-beta-D-glucosaminyl)asparagine residue in which the glucosamine residue may be further glycosylated, to yield a (substituted) N-acetyl-beta-D-glucosaminylamine and a peptide containing an aspartate residue.. Functionally, specifically deglycosylates the denatured form of N-linked glycoproteins in the cytoplasm and assists their proteasome-mediated degradation. Cleaves the beta-aspartyl-glucosamine (GlcNAc) of the glycan and the amide side chain of Asn, converting Asn to Asp. Prefers proteins containing high-mannose over those bearing complex type oligosaccharides. Can recognize misfolded proteins in the endoplasmic reticulum that are exported to the cytosol to be destroyed and deglycosylate them, while it has no activity toward native proteins. Deglycosylation is a prerequisite for subsequent proteasome-mediated degradation of some, but not all, misfolded glycoproteins. The protein is Peptide-N(4)-(N-acetyl-beta-glucosaminyl)asparagine amidase (Pngl) of Drosophila melanogaster (Fruit fly).